A 231-amino-acid chain; its full sequence is Adenylate kinase (231 aa).

12-17 (GAGKGT) is an ATP binding site. The NMP stretch occupies residues 32–61 (STGDMLRAAVKAKTPLGLEVKKIMESGGLV). AMP-binding positions include Thr33, Arg38, 59–61 (GLV), 87–90 (GFPR), and Gln94. Residues 124 to 161 (GRLIHPASGRTYHRRYNPPKVADKDDVTGEPLIQRADD) form an LID region. ATP is bound by residues Arg125 and 134–135 (TY). AMP is bound by residues Arg158 and Arg169. An ATP-binding site is contributed by Gly205.

This sequence belongs to the adenylate kinase family. Monomer.

The protein localises to the cytoplasm. The catalysed reaction is AMP + ATP = 2 ADP. It participates in purine metabolism; AMP biosynthesis via salvage pathway; AMP from ADP: step 1/1. In terms of biological role, catalyzes the reversible transfer of the terminal phosphate group between ATP and AMP. Plays an important role in cellular energy homeostasis and in adenine nucleotide metabolism. The protein is Adenylate kinase of Coxiella burnetii (strain CbuK_Q154) (Coxiella burnetii (strain Q154)).